Reading from the N-terminus, the 476-residue chain is Homeobox even-skipped homolog protein 2 (476 aa).

Disordered regions lie at residues 82-113 (TGSESTVSSEISSAAESRKKPGHYSEAAAEAD) and 142-185 (KGYA…GSGA). 2 stretches are compositionally biased toward low complexity: residues 84–96 (SESTVSSEISSAA) and 147–159 (SGSAAGTTTSASG). Positions 160-183 (SGLGSLHGGSGGSGGSAALGGSGS) are enriched in gly residues. A DNA-binding region (homeobox) is located at residues 188 to 247 (VRRYRTAFTREQIARLEKEFYRENYVSRPRRCELAAALNLPETTIKVWFQNRRMKDKRQR).

Belongs to the even-skipped homeobox family.

The protein localises to the nucleus. This Homo sapiens (Human) protein is Homeobox even-skipped homolog protein 2 (EVX2).